Consider the following 315-residue polypeptide: Olfactory receptor 11A1 (315 aa).

Residues 1-27 (MEIVSTGNETITEFVLLGFYDIPELHF) are Extracellular-facing. A glycan (N-linked (GlcNAc...) asparagine) is linked at asparagine 8. The chain crosses the membrane as a helical span at residues 28 to 48 (LFFIVFTAVYVFIIIGNMLII). At 49–56 (VAVVSSQR) the chain is on the cytoplasmic side. The helical transmembrane segment at 57–77 (LHKPMYIFLANLSFLDILYTS) threads the bilayer. Residues 78–100 (AVMPKMLEGFLQEATISVAGCLL) lie on the Extracellular side of the membrane. Cysteine 98 and cysteine 190 are joined by a disulfide. A helical membrane pass occupies residues 101–121 (QFFIFGSLATAECLLLAVMAY). Residues 122 to 140 (DRYLAICYPLHYPLLMGPR) lie on the Cytoplasmic side of the membrane. A helical membrane pass occupies residues 141–161 (RYMGLVVTTWLSGFVVDGLVV). Residues 162-198 (ALVAQLRFCGPNHIDQFYCDFMLFVGLACSDPRVAQV) lie on the Extracellular side of the membrane. The helical transmembrane segment at 199–218 (TTLILSVFCLTIPFGLILTS) threads the bilayer. At 219 to 238 (YARIVVAVLRVPAGASRRRA) the chain is on the cytoplasmic side. A helical membrane pass occupies residues 239–259 (FSTCSSHLAVVTTFYGTLMIF). Residues 260-272 (YVAPSAVHSQLLS) lie on the Extracellular side of the membrane. Residues 273-293 (KVFSLLYTVVTPLFNPVIYTM) traverse the membrane as a helical segment. The Cytoplasmic portion of the chain corresponds to 294–315 (RNKEVHQALRKILCIKQTETLD).

The protein belongs to the G-protein coupled receptor 1 family.

The protein localises to the cell membrane. In terms of biological role, odorant receptor. The protein is Olfactory receptor 11A1 (OR11A1) of Homo sapiens (Human).